The following is a 147-amino-acid chain: Large ribosomal subunit protein uL15 (147 aa).

Residues 1–46 (MSIRLENLSYTPGARKEKHRKGRGHAAGKGKQAGRGQSGQKKRSTV) form a disordered region. Residues 16 to 28 (KEKHRKGRGHAAG) are compositionally biased toward basic residues.

The protein belongs to the universal ribosomal protein uL15 family. Part of the 50S ribosomal subunit.

In terms of biological role, binds to the 23S rRNA. This is Large ribosomal subunit protein uL15 from Mesomycoplasma hyopneumoniae (strain 232) (Mycoplasma hyopneumoniae).